The chain runs to 61 residues: Small ribosomal subunit protein uS14B (61 aa).

Zn(2+) is bound by residues Cys-24, Cys-27, Cys-40, and Cys-43.

Belongs to the universal ribosomal protein uS14 family. Zinc-binding uS14 subfamily. As to quaternary structure, part of the 30S ribosomal subunit. Contacts proteins S3 and S10. It depends on Zn(2+) as a cofactor.

Functionally, binds 16S rRNA, required for the assembly of 30S particles and may also be responsible for determining the conformation of the 16S rRNA at the A site. The sequence is that of Small ribosomal subunit protein uS14B from Salinispora arenicola (strain CNS-205).